The sequence spans 1006 residues: Probable beta-galactosidase A (1006 aa).

The first 18 residues, 1 to 18, serve as a signal peptide directing secretion; that stretch reads MKLLSVCAIALLAAQAAG. Substrate is bound by residues Y96, N140, A141, and E142. N156 carries N-linked (GlcNAc...) asparagine glycosylation. N199 lines the substrate pocket. The active-site Proton donor is E200. C205 and C206 are joined by a disulfide. Y260 provides a ligand contact to substrate. C266 and C315 form a disulfide bridge. The Nucleophile role is filled by E298. Substrate is bound at residue Y364. N373, N402, N422, N622, N760, N777, and N914 each carry an N-linked (GlcNAc...) asparagine glycan.

Belongs to the glycosyl hydrolase 35 family.

It localises to the secreted. The enzyme catalyses Hydrolysis of terminal non-reducing beta-D-galactose residues in beta-D-galactosides.. In terms of biological role, cleaves beta-linked terminal galactosyl residues from gangliosides, glycoproteins, and glycosaminoglycans. The protein is Probable beta-galactosidase A (lacA) of Aspergillus fumigatus (strain ATCC MYA-4609 / CBS 101355 / FGSC A1100 / Af293) (Neosartorya fumigata).